The sequence spans 406 residues: MKAVIFIMDGLGDRPNKDGNTPLKEAKTPVMDKMAKEGICGLMNAVDIGVRPGSDTAHLAILGYDPYTTYTGRGPFEACGVGVTVKPGDIAFRCNFSTVDENFTVMDRRAGRIENTLELEKELDGLKIDDVDIIFKESGGYRAALVLRGPGLSDKISDADPKKEGKKVKDINPLDDSKEAKKTAEIVNKLLKIAYEKLDKHPVNEERRKQNLPVANMIVPRGVGQVPEIMQFTEKTGLKGACIAGTGLIKGIAKMVGLDVIDVEGCDGTPNSDFMAKAFAIVKTLEDYDFILVNVKGADEAGHDGNYELKKEIIERIDGMLDYITKNINKDEVYIAMSGDHSTPIEEMDHSADPLPIVIWGKSVRVDDVEKFDEFSTYKGGLNWIKGTNIMPILMDLMSIAKKYGA.

Belongs to the BPG-independent phosphoglycerate mutase family. A-PGAM subfamily.

It catalyses the reaction (2R)-2-phosphoglycerate = (2R)-3-phosphoglycerate. The protein operates within carbohydrate degradation; glycolysis; pyruvate from D-glyceraldehyde 3-phosphate: step 3/5. Functionally, catalyzes the interconversion of 2-phosphoglycerate and 3-phosphoglycerate. The sequence is that of 2,3-bisphosphoglycerate-independent phosphoglycerate mutase from Methanococcus maripaludis (strain C6 / ATCC BAA-1332).